Here is a 138-residue protein sequence, read N- to C-terminus: Large ribosomal subunit protein uL16 (138 aa).

Over residues 1–17 the composition is skewed to basic residues; it reads MLIPRKVKHRKQHHPRQ. Residues 1 to 22 form a disordered region; the sequence is MLIPRKVKHRKQHHPRQRGIAS.

Belongs to the universal ribosomal protein uL16 family. Part of the 50S ribosomal subunit.

Its function is as follows. Binds 23S rRNA and is also seen to make contacts with the A and possibly P site tRNAs. The protein is Large ribosomal subunit protein uL16 of Mycobacterium avium (strain 104).